We begin with the raw amino-acid sequence, 282 residues long: MAWFKRDNPPQAKGPAHRVKVPEGLWTKCVSCGETIYTKDIENNLNVCPKCNHHYRVSSKKRLELLLDEGSFTEFDAGVVSVDFLEFKDSKSYQDRIDQALAKGGSKDAIICGSGRIEGTPVQICVFDFSFMGGSMGSVVGEKITRGIERALSDRTPCIIVSASGGARMQESILSLMQMAKTSAALAKLREAGLPFVSILTDPTTGGVTASFAMLGDINMAEPKALIGFAGPRVIEQTIRQKLPQGFQRSEYLLDHGMVDVIVERSKMKSQLSSILTMLYRP.

A CoA carboxyltransferase N-terminal domain is found at 25–282; it reads LWTKCVSCGE…SSILTMLYRP (258 aa). Cys29, Cys32, Cys48, and Cys51 together coordinate Zn(2+). The C4-type zinc finger occupies 29-51; sequence CVSCGETIYTKDIENNLNVCPKC.

Belongs to the AccD/PCCB family. Acetyl-CoA carboxylase is a heterohexamer composed of biotin carboxyl carrier protein (AccB), biotin carboxylase (AccC) and two subunits each of ACCase subunit alpha (AccA) and ACCase subunit beta (AccD). Requires Zn(2+) as cofactor.

The protein resides in the cytoplasm. It carries out the reaction N(6)-carboxybiotinyl-L-lysyl-[protein] + acetyl-CoA = N(6)-biotinyl-L-lysyl-[protein] + malonyl-CoA. It functions in the pathway lipid metabolism; malonyl-CoA biosynthesis; malonyl-CoA from acetyl-CoA: step 1/1. Component of the acetyl coenzyme A carboxylase (ACC) complex. Biotin carboxylase (BC) catalyzes the carboxylation of biotin on its carrier protein (BCCP) and then the CO(2) group is transferred by the transcarboxylase to acetyl-CoA to form malonyl-CoA. In Citrifermentans bemidjiense (strain ATCC BAA-1014 / DSM 16622 / JCM 12645 / Bem) (Geobacter bemidjiensis), this protein is Acetyl-coenzyme A carboxylase carboxyl transferase subunit beta.